The sequence spans 431 residues: Acyl transferase 8 (431 aa).

H169 serves as the catalytic Proton acceptor. Disordered stretches follow at residues 220–247 (VADA…RAPA), 260–313 (HHAG…DHLR), and 331–400 (GLRV…PPPT). The segment covering 224 to 234 (RGGVRPGVPRP) has biased composition (low complexity). The span at 264 to 273 (DGGGGGGGGR) shows a compositional bias: gly residues. Composition is skewed to basic residues over residues 297 to 306 (ERRRRRRRGR) and 335 to 380 (GRPR…RRLP). Residues 381–394 (QRHDAPRLITERAH) show a composition bias toward basic and acidic residues.

This sequence belongs to the plant acyltransferase family.

In terms of biological role, involved in the incorporation of ferulate into the cell wall. May act as arabinoxylan feruloyl transferase. The sequence is that of Acyl transferase 8 from Oryza sativa subsp. japonica (Rice).